Reading from the N-terminus, the 205-residue chain is MTGKFITFEGIDGAGKSTHLAWFAQQLEARLAPQGRKVVVTREPGGTPLGERLREVLLHERMHLETEALLMFASRREHIAEVIQPALERGDWVISDRFTDATFAYQGGGRGLAIERLEALEQWVQQGLQPTRTLLFDLAPEVAAARLADARTPDKFEAESAQFFVRTRAEYLRRAAAEPGRFVVIDAARARDDIRKDLEKLLASL.

Position 10–17 (Gly10–Ser17) interacts with ATP.

The protein belongs to the thymidylate kinase family.

The enzyme catalyses dTMP + ATP = dTDP + ADP. Phosphorylation of dTMP to form dTDP in both de novo and salvage pathways of dTTP synthesis. The polypeptide is Thymidylate kinase (Ralstonia nicotianae (strain ATCC BAA-1114 / GMI1000) (Ralstonia solanacearum)).